A 307-amino-acid polypeptide reads, in one-letter code: Probable RuBisCO transcriptional regulator (307 aa).

One can recognise an HTH lysR-type domain in the interval 4 to 61 (FTLQQLRILKAVATEKNFTKAAELLYLSQPSLSKQIKTLEKNLDILLVNRENNKISLT). Residues 21–40 (FTKAAELLYLSQPSLSKQIK) constitute a DNA-binding region (H-T-H motif).

This sequence belongs to the LysR transcriptional regulatory family.

It is found in the plastid. It localises to the chloroplast. Its function is as follows. Trans-acting transcriptional regulator of RuBisCO genes (rbcL and rbcS) expression. The sequence is that of Probable RuBisCO transcriptional regulator (rbcR) from Phaeodactylum tricornutum (strain CCAP 1055/1).